We begin with the raw amino-acid sequence, 282 residues long: Phosphatidylserine decarboxylase proenzyme (282 aa).

Active-site charge relay system; for autoendoproteolytic cleavage activity residues include Asp89, His145, and Ser249. The Schiff-base intermediate with substrate; via pyruvic acid; for decarboxylase activity role is filled by Ser249. Residue Ser249 is modified to Pyruvic acid (Ser); by autocatalysis.

This sequence belongs to the phosphatidylserine decarboxylase family. PSD-B subfamily. Prokaryotic type I sub-subfamily. Heterodimer of a large membrane-associated beta subunit and a small pyruvoyl-containing alpha subunit. Requires pyruvate as cofactor. Post-translationally, is synthesized initially as an inactive proenzyme. Formation of the active enzyme involves a self-maturation process in which the active site pyruvoyl group is generated from an internal serine residue via an autocatalytic post-translational modification. Two non-identical subunits are generated from the proenzyme in this reaction, and the pyruvate is formed at the N-terminus of the alpha chain, which is derived from the carboxyl end of the proenzyme. The autoendoproteolytic cleavage occurs by a canonical serine protease mechanism, in which the side chain hydroxyl group of the serine supplies its oxygen atom to form the C-terminus of the beta chain, while the remainder of the serine residue undergoes an oxidative deamination to produce ammonia and the pyruvoyl prosthetic group on the alpha chain. During this reaction, the Ser that is part of the protease active site of the proenzyme becomes the pyruvoyl prosthetic group, which constitutes an essential element of the active site of the mature decarboxylase.

The protein resides in the cell membrane. The enzyme catalyses a 1,2-diacyl-sn-glycero-3-phospho-L-serine + H(+) = a 1,2-diacyl-sn-glycero-3-phosphoethanolamine + CO2. The protein operates within phospholipid metabolism; phosphatidylethanolamine biosynthesis; phosphatidylethanolamine from CDP-diacylglycerol: step 2/2. Functionally, catalyzes the formation of phosphatidylethanolamine (PtdEtn) from phosphatidylserine (PtdSer). This chain is Phosphatidylserine decarboxylase proenzyme, found in Anaeromyxobacter sp. (strain K).